The sequence spans 82 residues: Small ribosomal subunit protein bS18 (82 aa).

The tract at residues 1-20 (MSETSSAPVRRPFHRRRKTC) is disordered.

Belongs to the bacterial ribosomal protein bS18 family. As to quaternary structure, part of the 30S ribosomal subunit. Forms a tight heterodimer with protein bS6.

Functionally, binds as a heterodimer with protein bS6 to the central domain of the 16S rRNA, where it helps stabilize the platform of the 30S subunit. The sequence is that of Small ribosomal subunit protein bS18 from Rhizobium johnstonii (strain DSM 114642 / LMG 32736 / 3841) (Rhizobium leguminosarum bv. viciae).